The primary structure comprises 501 residues: Glucans biosynthesis protein G (501 aa).

An N-terminal signal peptide occupies residues 1–25; the sequence is MNRRQVLTGLAALPLLQAKPDPAAA.

Belongs to the OpgD/OpgG family.

It is found in the periplasm. It participates in glycan metabolism; osmoregulated periplasmic glucan (OPG) biosynthesis. Involved in the biosynthesis of osmoregulated periplasmic glucans (OPGs). The sequence is that of Glucans biosynthesis protein G from Rhodopseudomonas palustris (strain ATCC BAA-98 / CGA009).